A 331-amino-acid polypeptide reads, in one-letter code: Probable cytosolic iron-sulfur protein assembly protein Ciao1 (331 aa).

7 WD repeats span residues 12–51 (GHKG…WTTK), 57–96 (GHKR…ATLE), 97–136 (GHEN…EFEC), 142–181 (AHTQ…SDWD), 188–227 (SHTS…NEAG), 246–285 (QHSR…KRDE), and 297–331 (AHEQ…KLQE).

This sequence belongs to the WD repeat CIA1 family.

Its function is as follows. Essential component of the cytosolic iron-sulfur (Fe/S) protein assembly machinery. Required for the maturation of extramitochondrial Fe/S proteins. This chain is Probable cytosolic iron-sulfur protein assembly protein Ciao1, found in Drosophila grimshawi (Hawaiian fruit fly).